Reading from the N-terminus, the 178-residue chain is MRRVVKAAALAAGATGLFSRVQTSVAIGRSFSTPQSQFQESSPVWKLGRLNHVAVAVPDLEKASSFYRDVLGAQVSEVVPLPEHGVSVVFVNLGNTKMELLHPLGSDSPITGFLQKNKAGGMHHVCIEVDNISAAVMDLKKKKIRSLSDEAKIGAHGKPVIFLHPKDCGGVLVELEQA.

A mitochondrion-targeting transit peptide spans 1–38 (MRRVVKAAALAAGATGLFSRVQTSVAIGRSFSTPQSQF). In terms of domain architecture, VOC spans 49-178 (RLNHVAVAVP…GGVLVELEQA (130 aa)). His52 is a Co(2+) binding site. Residue Lys116 is modified to N6-succinyllysine. His124 provides a ligand contact to Co(2+). Lys152 bears the N6-acetyllysine; alternate mark. Lys152 is subject to N6-succinyllysine; alternate. Glu174 contacts Co(2+).

The protein belongs to the methylmalonyl-CoA epimerase family.

It localises to the mitochondrion. The catalysed reaction is (R)-methylmalonyl-CoA = (S)-methylmalonyl-CoA. Methylmalonyl-CoA epimerase involved in propionyl-CoA metabolism. In Mus musculus (Mouse), this protein is Methylmalonyl-CoA epimerase, mitochondrial.